The chain runs to 127 residues: Holo-[acyl-carrier-protein] synthase (127 aa).

Mg(2+) contacts are provided by D7 and E56.

The protein belongs to the P-Pant transferase superfamily. AcpS family. Mg(2+) is required as a cofactor.

The protein localises to the cytoplasm. It catalyses the reaction apo-[ACP] + CoA = holo-[ACP] + adenosine 3',5'-bisphosphate + H(+). Functionally, transfers the 4'-phosphopantetheine moiety from coenzyme A to a Ser of acyl-carrier-protein. In Onion yellows phytoplasma (strain OY-M), this protein is Holo-[acyl-carrier-protein] synthase.